We begin with the raw amino-acid sequence, 443 residues long: Putative cytochrome bd menaquinol oxidase subunit I (443 aa).

The next 9 helical transmembrane spans lie at Ile19–Tyr39, Val60–Trp80, Leu93–Val113, Ile125–Val145, Phe176–Ala196, Ala219–His239, Leu322–Val342, Leu357–Phe377, and Val405–Leu425. His182 is a heme b binding site.

The protein belongs to the cytochrome ubiquinol oxidase subunit 1 family. It depends on heme b as a cofactor.

It localises to the cell membrane. Its function is as follows. May have a role in sporulation. Can compensate for the loss of cytochrome aa3. The chain is Putative cytochrome bd menaquinol oxidase subunit I (ythA) from Bacillus subtilis (strain 168).